Reading from the N-terminus, the 108-residue chain is Small ribosomal subunit protein eS25y (108 aa).

Positions 1 to 36 are disordered; the sequence is MAPKKDKVPPPSSKPAKSGGGKQKKKKWSKGKQKEK. Positions 22-31 are enriched in basic residues; the sequence is KQKKKKWSKG.

The protein belongs to the eukaryotic ribosomal protein eS25 family.

The sequence is that of Small ribosomal subunit protein eS25y (RPS25B) from Arabidopsis thaliana (Mouse-ear cress).